The primary structure comprises 941 residues: Heat shock protein 70 homolog (941 aa).

The segment at 851–887 is disordered; that stretch reads ENQPDIPEDSEDSESEDDTTTSKDSESSEITENLALP. Positions 856 to 869 are enriched in acidic residues; sequence IPEDSEDSESEDDT.

It belongs to the heat shock protein 70 family.

Its function is as follows. Probable chaperone. The protein is Heat shock protein 70 homolog of Acanthamoeba polyphaga (Amoeba).